A 262-amino-acid chain; its full sequence is 3-methyl-2-oxobutanoate hydroxymethyltransferase (262 aa).

2 residues coordinate Mg(2+): D42 and D81. 3-methyl-2-oxobutanoate contacts are provided by residues 42–43 (DS), D81, and K110. E112 lines the Mg(2+) pocket. The active-site Proton acceptor is E180.

Belongs to the PanB family. In terms of assembly, homodecamer; pentamer of dimers. Mg(2+) is required as a cofactor.

Its subcellular location is the cytoplasm. The enzyme catalyses 3-methyl-2-oxobutanoate + (6R)-5,10-methylene-5,6,7,8-tetrahydrofolate + H2O = 2-dehydropantoate + (6S)-5,6,7,8-tetrahydrofolate. It functions in the pathway cofactor biosynthesis; (R)-pantothenate biosynthesis; (R)-pantoate from 3-methyl-2-oxobutanoate: step 1/2. Functionally, catalyzes the reversible reaction in which hydroxymethyl group from 5,10-methylenetetrahydrofolate is transferred onto alpha-ketoisovalerate to form ketopantoate. The sequence is that of 3-methyl-2-oxobutanoate hydroxymethyltransferase from Legionella pneumophila (strain Paris).